A 435-amino-acid polypeptide reads, in one-letter code: Methylenetetrahydrofolate--tRNA-(uracil-5-)-methyltransferase TrmFO (435 aa).

An FAD-binding site is contributed by 7–12; it reads GAGLAG.

This sequence belongs to the MnmG family. TrmFO subfamily. Requires FAD as cofactor.

The protein localises to the cytoplasm. The catalysed reaction is uridine(54) in tRNA + (6R)-5,10-methylene-5,6,7,8-tetrahydrofolate + NADH + H(+) = 5-methyluridine(54) in tRNA + (6S)-5,6,7,8-tetrahydrofolate + NAD(+). The enzyme catalyses uridine(54) in tRNA + (6R)-5,10-methylene-5,6,7,8-tetrahydrofolate + NADPH + H(+) = 5-methyluridine(54) in tRNA + (6S)-5,6,7,8-tetrahydrofolate + NADP(+). In terms of biological role, catalyzes the folate-dependent formation of 5-methyl-uridine at position 54 (M-5-U54) in all tRNAs. In Thermotoga petrophila (strain ATCC BAA-488 / DSM 13995 / JCM 10881 / RKU-1), this protein is Methylenetetrahydrofolate--tRNA-(uracil-5-)-methyltransferase TrmFO.